Consider the following 504-residue polypeptide: Anaerobic nitric oxide reductase transcription regulator NorR (504 aa).

Residue aspartate 57 is modified to 4-aspartylphosphate. Positions 187-416 constitute a Sigma-54 factor interaction domain; the sequence is MIGLSPGMTQ…LEHAIHRAVV (230 aa). ATP is bound by residues 215–222 and 278–287; these read GETGTGKE and ADNGTLFLDE. A DNA-binding region (H-T-H motif) is located at residues 479 to 498; sequence WAACARMLETDVANLHRLAK.

The protein operates within nitrogen metabolism; nitric oxide reduction. In terms of biological role, required for the expression of anaerobic nitric oxide (NO) reductase, acts as a transcriptional activator for at least the norVW operon. Activation also requires sigma-54. The protein is Anaerobic nitric oxide reductase transcription regulator NorR of Escherichia coli (strain ATCC 8739 / DSM 1576 / NBRC 3972 / NCIMB 8545 / WDCM 00012 / Crooks).